The sequence spans 124 residues: Small ribosomal subunit protein uS12 (124 aa).

D89 carries the post-translational modification 3-methylthioaspartic acid.

This sequence belongs to the universal ribosomal protein uS12 family. As to quaternary structure, part of the 30S ribosomal subunit. Contacts proteins S8 and S17. May interact with IF1 in the 30S initiation complex.

Its function is as follows. With S4 and S5 plays an important role in translational accuracy. In terms of biological role, interacts with and stabilizes bases of the 16S rRNA that are involved in tRNA selection in the A site and with the mRNA backbone. Located at the interface of the 30S and 50S subunits, it traverses the body of the 30S subunit contacting proteins on the other side and probably holding the rRNA structure together. The combined cluster of proteins S8, S12 and S17 appears to hold together the shoulder and platform of the 30S subunit. The polypeptide is Small ribosomal subunit protein uS12 (Shewanella baltica (strain OS223)).